The primary structure comprises 206 residues: Ephrin-A4 (206 aa).

The N-terminal stretch at 1-25 is a signal peptide; sequence MRLLPLLRTVLWAALLGSRLPGCSS. Residues 26–158 enclose the Ephrin RBD domain; that stretch reads LRHPIYWNSS…RLQVSVCCKE (133 aa). Residue N33 is glycosylated (N-linked (GlcNAc...) asparagine). The short motif at 41–43 is the Cell attachment site element; sequence RGD. 2 disulfide bridges follow: C58/C99 and C86/C147. Residue N98 is glycosylated (N-linked (GlcNAc...) asparagine). The disordered stretch occupies residues 161-180; it reads SSHESAHPVGSPGESGTSGW. S175 carries GPI-anchor amidated serine lipidation. Residues 176-206 constitute a propeptide, removed in mature form; it reads GTSGWRGGHAPSPLCLLLLLLLPILRLLRVL.

Belongs to the ephrin family. In terms of tissue distribution, expressed in myogenic progenitor cells.

The protein localises to the cell membrane. In terms of biological role, cell surface GPI-bound ligand for Eph receptors, a family of receptor tyrosine kinases which are crucial for migration, repulsion and adhesion during neuronal, vascular and epithelial development. Binds promiscuously Eph receptors residing on adjacent cells, leading to contact-dependent bidirectional signaling into neighboring cells. May play a role in the interaction between activated B-lymphocytes and dendritic cells in tonsils. This chain is Ephrin-A4 (Efna4), found in Mus musculus (Mouse).